The primary structure comprises 585 residues: 4-hydroxy-3-methylbut-2-en-1-yl diphosphate synthase (flavodoxin) (585 aa).

[4Fe-4S] cluster is bound by residues Cys492, Cys495, Cys526, and Glu533.

This sequence belongs to the IspG family. It depends on [4Fe-4S] cluster as a cofactor.

The catalysed reaction is (2E)-4-hydroxy-3-methylbut-2-enyl diphosphate + oxidized [flavodoxin] + H2O + 2 H(+) = 2-C-methyl-D-erythritol 2,4-cyclic diphosphate + reduced [flavodoxin]. It participates in isoprenoid biosynthesis; isopentenyl diphosphate biosynthesis via DXP pathway; isopentenyl diphosphate from 1-deoxy-D-xylulose 5-phosphate: step 5/6. Functionally, converts 2C-methyl-D-erythritol 2,4-cyclodiphosphate (ME-2,4cPP) into 1-hydroxy-2-methyl-2-(E)-butenyl 4-diphosphate. This Akkermansia muciniphila (strain ATCC BAA-835 / DSM 22959 / JCM 33894 / BCRC 81048 / CCUG 64013 / CIP 107961 / Muc) protein is 4-hydroxy-3-methylbut-2-en-1-yl diphosphate synthase (flavodoxin).